The sequence spans 48 residues: uncharacterized protein (48 aa).

The interval 1-48 is disordered; it reads MTKIPINIPATSGKIKFGITPSSNKSPSLSPSPSNGQLGGGRGYILEP. Residues 21-36 show a composition bias toward low complexity; that stretch reads PSSNKSPSLSPSPSNG. A compositionally biased stretch (gly residues) spans 37 to 48; it reads QLGGGRGYILEP.

This is an uncharacterized protein from Dictyostelium discoideum (Social amoeba).